Reading from the N-terminus, the 146-residue chain is Large ribosomal subunit protein uL15 (146 aa).

The span at 1 to 13 shows a compositional bias: basic and acidic residues; it reads MKLHELKAAEGSR. The segment at 1–56 is disordered; it reads MKLHELKAAEGSRRVRNRVGRGAATGNGKTSGRGQKGQKARSGGKLRPGFEGGQLP. The segment covering 23-35 has biased composition (gly residues); sequence AATGNGKTSGRGQ.

It belongs to the universal ribosomal protein uL15 family. Part of the 50S ribosomal subunit.

Its function is as follows. Binds to the 23S rRNA. The polypeptide is Large ribosomal subunit protein uL15 (Staphylococcus epidermidis (strain ATCC 35984 / DSM 28319 / BCRC 17069 / CCUG 31568 / BM 3577 / RP62A)).